Consider the following 337-residue polypeptide: Holliday junction branch migration complex subunit RuvB (337 aa).

The segment at 1–181 is large ATPase domain (RuvB-L); that stretch reads MQRLVEIERF…FGMNFRMQFY (181 aa). ATP-binding positions include Leu-20, Arg-21, Gly-62, Lys-65, Thr-66, Thr-67, 128 to 130, Arg-171, Tyr-181, and Arg-218; that span reads EDF. Thr-66 is a binding site for Mg(2+). The small ATPAse domain (RuvB-S) stretch occupies residues 182–252; the sequence is SPEELSKIIS…RAQYALDELG (71 aa). The segment at 255 to 337 is head domain (RuvB-H); sequence SYGFDEMDIK…MPALDDGGLF (83 aa). Residues Arg-309 and Arg-314 each contribute to the DNA site.

The protein belongs to the RuvB family. As to quaternary structure, homohexamer. Forms an RuvA(8)-RuvB(12)-Holliday junction (HJ) complex. HJ DNA is sandwiched between 2 RuvA tetramers; dsDNA enters through RuvA and exits via RuvB. An RuvB hexamer assembles on each DNA strand where it exits the tetramer. Each RuvB hexamer is contacted by two RuvA subunits (via domain III) on 2 adjacent RuvB subunits; this complex drives branch migration. In the full resolvosome a probable DNA-RuvA(4)-RuvB(12)-RuvC(2) complex forms which resolves the HJ.

It is found in the cytoplasm. It carries out the reaction ATP + H2O = ADP + phosphate + H(+). Functionally, the RuvA-RuvB-RuvC complex processes Holliday junction (HJ) DNA during genetic recombination and DNA repair, while the RuvA-RuvB complex plays an important role in the rescue of blocked DNA replication forks via replication fork reversal (RFR). RuvA specifically binds to HJ cruciform DNA, conferring on it an open structure. The RuvB hexamer acts as an ATP-dependent pump, pulling dsDNA into and through the RuvAB complex. RuvB forms 2 homohexamers on either side of HJ DNA bound by 1 or 2 RuvA tetramers; 4 subunits per hexamer contact DNA at a time. Coordinated motions by a converter formed by DNA-disengaged RuvB subunits stimulates ATP hydrolysis and nucleotide exchange. Immobilization of the converter enables RuvB to convert the ATP-contained energy into a lever motion, pulling 2 nucleotides of DNA out of the RuvA tetramer per ATP hydrolyzed, thus driving DNA branch migration. The RuvB motors rotate together with the DNA substrate, which together with the progressing nucleotide cycle form the mechanistic basis for DNA recombination by continuous HJ branch migration. Branch migration allows RuvC to scan DNA until it finds its consensus sequence, where it cleaves and resolves cruciform DNA. This is Holliday junction branch migration complex subunit RuvB from Sulfurimonas denitrificans (strain ATCC 33889 / DSM 1251) (Thiomicrospira denitrificans (strain ATCC 33889 / DSM 1251)).